The primary structure comprises 517 residues: Nectin-1 (517 aa).

Positions 1–30 are cleaved as a signal peptide; sequence MARMGLAGAAGRWWGLALGLTAFFLPGVHS. The region spanning 31-141 is the Ig-like V-type domain; sequence QVVQVNDSMY…GNRESQLNLT (111 aa). The Extracellular segment spans residues 31-355; it reads QVVQVNDSMY…GRRAGPVPTA (325 aa). N36, N72, and N139 each carry an N-linked (GlcNAc...) asparagine glycan. C51 and C124 are joined by a disulfide. Ig-like C2-type domains lie at 149–238 and 247–334; these read WIEG…FKES and PEVT…VNIT. 2 cysteine pairs are disulfide-bonded: C172/C226 and C269/C316. An N-linked (GlcNAc...) (complex) asparagine glycan is attached at N202. Residues 282–299 are interaction with FGFR; it reads WTTLNGSLPKGVEAQNRT. N-linked (GlcNAc...) asparagine glycans are attached at residues N286, N297, N307, and N332. The helical transmembrane segment at 356-376 threads the bilayer; it reads IIGGVAGSILLVLIVVGGIVV. Residues 377–517 are Cytoplasmic-facing; that stretch reads ALRRRRHTFK…SFISKKEWYV (141 aa). The tract at residues 399–488 is disordered; that stretch reads GYSKAGIPQH…DGYGDRTLGY (90 aa). 3 positions are modified to phosphoserine: S422, S434, and S435. Y436 is subject to Phosphotyrosine. Over residues 436 to 445 the composition is skewed to acidic residues; the sequence is YEEEEEEEEG. Positions 449-466 are enriched in basic and acidic residues; that stretch reads GERKVGGPHPKYDEDAKR. S511 bears the Phosphoserine mark.

The protein belongs to the nectin family. As to quaternary structure, cis- and trans-homodimer. Can form trans-heterodimers with NECTIN3 and with NECTIN4. Interaction between NECTIN1 and NECTIN3 on the pre- and postsynaptic sites, respectively, initiates the formation of puncta adherentia junctions between axons and dendrites. Interacts (via cytoplasmic domain) with AFDN (via PDZ domain); this interaction recruits NECTIN1 to cadherin-based adherens junctions and provides a connection with the actin cytoskeleton. Interacts with integrin alphaV/beta3. Interacts (via Ig-like C2-type domain 2) with FGFR1, FGFR2 and FGFR3. (Microbial infection) Interacts with herpes simplex virus 1/HHV-1, herpes simplex virus 2/HHV-2, and pseudorabies virus/PRV envelope glycoprotein D. In terms of processing, (Microbial infection) Ubiquitinated by CBL following infection by herpes simplex virus 1/HHV-1 and association with HHV-1 envelope glycoprotein D, leading to its removal from cell surface.

The protein localises to the cell membrane. It is found in the cell junction. It localises to the adherens junction. Its subcellular location is the presynaptic cell membrane. The protein resides in the secreted. In terms of biological role, cell adhesion molecule that promotes cell-cell contacts and plays important roles in the development of the nervous system. Acts by forming homophilic or heterophilic trans-dimers. Heterophilic interactions have been detected between NECTIN1 and NECTIN3 and between NECTIN1 and NECTIN4. Involved in axon guidance by promoting contacts between the commissural axons and the floor plate cells. Involved in synaptogegesis. Has some neurite outgrowth-promoting activity. Promotes formation of checkerboard-like cellular pattern of hair cells and supporting cells in the auditory epithelium via heterophilic interaction with NECTIN3: NECTIN1 is present in the membrane of hair cells and associates with NECTIN3 on supporting cells, thereby mediating heterotypic adhesion between these two cell types. Required for enamel mineralization. Functionally, (Microbial infection) Acts as a receptor for herpes simplex virus 1/HHV-1, herpes simplex virus 2/HHV-2, and pseudorabies virus/PRV. Constitutes the major receptor for herpes simplex virus 1/HHV-1 entry into host cells. The polypeptide is Nectin-1 (Homo sapiens (Human)).